Consider the following 348-residue polypeptide: Selenide, water dikinase (348 aa).

Selenocysteine 17 is an active-site residue. Selenocysteine 17 is a non-standard amino acid (selenocysteine). ATP is bound by residues lysine 20 and 48 to 50 (TAD). Position 51 (aspartate 51) interacts with Mg(2+). Residues aspartate 68, aspartate 91, and 138 to 140 (GHT) each bind ATP. Residue aspartate 91 participates in Mg(2+) binding. Residue aspartate 226 coordinates Mg(2+).

Belongs to the selenophosphate synthase 1 family. Class I subfamily. Homodimer. The cofactor is Mg(2+).

The catalysed reaction is hydrogenselenide + ATP + H2O = selenophosphate + AMP + phosphate + 2 H(+). Its function is as follows. Synthesizes selenophosphate from selenide and ATP. The protein is Selenide, water dikinase of Clostridioides difficile (strain 630) (Peptoclostridium difficile).